A 159-amino-acid polypeptide reads, in one-letter code: RNA pyrophosphohydrolase (159 aa).

Positions G6 to K149 constitute a Nudix hydrolase domain. The Nudix box signature appears at G38 to G59.

This sequence belongs to the Nudix hydrolase family. RppH subfamily. A divalent metal cation is required as a cofactor.

In terms of biological role, accelerates the degradation of transcripts by removing pyrophosphate from the 5'-end of triphosphorylated RNA, leading to a more labile monophosphorylated state that can stimulate subsequent ribonuclease cleavage. The sequence is that of RNA pyrophosphohydrolase from Pseudomonas putida (strain ATCC 700007 / DSM 6899 / JCM 31910 / BCRC 17059 / LMG 24140 / F1).